We begin with the raw amino-acid sequence, 359 residues long: Histidinol-phosphate aminotransferase (359 aa).

Lys220 bears the N6-(pyridoxal phosphate)lysine mark.

The protein belongs to the class-II pyridoxal-phosphate-dependent aminotransferase family. Histidinol-phosphate aminotransferase subfamily. Homodimer. Requires pyridoxal 5'-phosphate as cofactor.

The catalysed reaction is L-histidinol phosphate + 2-oxoglutarate = 3-(imidazol-4-yl)-2-oxopropyl phosphate + L-glutamate. It participates in amino-acid biosynthesis; L-histidine biosynthesis; L-histidine from 5-phospho-alpha-D-ribose 1-diphosphate: step 7/9. This chain is Histidinol-phosphate aminotransferase, found in Neisseria gonorrhoeae (strain ATCC 700825 / FA 1090).